The primary structure comprises 212 residues: Octanoyltransferase (212 aa).

Residues 31–209 (AETQDEIWLV…HFADLLGYNI (179 aa)) form the BPL/LPL catalytic domain. Residues 70 to 77 (RGGQITYH), 138 to 140 (SLG), and 151 to 153 (GLA) each bind substrate. The active-site Acyl-thioester intermediate is cysteine 169.

Belongs to the LipB family.

It is found in the cytoplasm. It carries out the reaction octanoyl-[ACP] + L-lysyl-[protein] = N(6)-octanoyl-L-lysyl-[protein] + holo-[ACP] + H(+). It participates in protein modification; protein lipoylation via endogenous pathway; protein N(6)-(lipoyl)lysine from octanoyl-[acyl-carrier-protein]: step 1/2. In terms of biological role, catalyzes the transfer of endogenously produced octanoic acid from octanoyl-acyl-carrier-protein onto the lipoyl domains of lipoate-dependent enzymes. Lipoyl-ACP can also act as a substrate although octanoyl-ACP is likely to be the physiological substrate. This Haemophilus influenzae (strain PittEE) protein is Octanoyltransferase.